The sequence spans 828 residues: MTRSPLHRLIFGGLRRLLYLWVRSETINQSSMTLNLDRSRPVFYALPSPSLTDLAVLDHECTKAGLPRPVLPVAVGPLQEPAAFFYLTPDPDWLGRQDKSGAPPTLERLVAAVSQHAEEDAQIIPVSVFWGQTPASESSPWKLLFADSWAVTGRLRRLLTVLILGRKTRVQFSAPIHLRELVQHNKGHARTVRMAQRLMRVHFRNLKTAVIGPDISHRRNLVKGLVHAPLVRQAIADEAQRENLPLAKAEAQALRYGNEIASDYTYTVIRFLEVVLSWFWNKIYDGIKVNHIEQVQGIAPGHEVIYVPCHRSHIDYLLLSYLLFRNGLTPPHVAAGINLNMPVVGNLLRRGGAFFMRRTFKGNPLYTAVFNEYLHTLYTKGFPVEYFVEGGRSRTGRMLQPRTGMLAITLRSFLRSSRTPIVFVPVYIGYERVLEGRTYLGELRGASKKKESVLDIFKVFGALKQRFGQVYVNFGEPIRLAGFLDQQQPGWREQDHGPQYRPDWLNATTTRLGETVARHLNEAAAINPVNLVALALLSTSRLALDERALTRVLDLYLALLRQVPYSPHTTLPDGDGQALIEHVRSMNLVAEQKDALGRILFLDEGNAVLMTYYRNNVLHIFALPALLASFFLSSSRMSRELLGQYVHALYPYLQAELFLRWAPEQLDEVIDQWLAALVEQGLLRQENDVYVRPAPSSRQFVLLTLLARTITQTLQRFYMATSLLINSGQNSLSAEALEDLCVMMAQRLSILHGLNAPEFFDKTLFRHFIQTLLQQGVLHTDTQGKLGYHDKLGELAEGVAKRVLSAELRLSIRQVALHRDDGLESSTI.

The HXXXXD motif motif lies at 309-314 (CHRSHI).

The protein belongs to the GPAT/DAPAT family.

The protein localises to the cell inner membrane. It carries out the reaction sn-glycerol 3-phosphate + an acyl-CoA = a 1-acyl-sn-glycero-3-phosphate + CoA. It participates in phospholipid metabolism; CDP-diacylglycerol biosynthesis; CDP-diacylglycerol from sn-glycerol 3-phosphate: step 1/3. This Pseudomonas putida (strain GB-1) protein is Glycerol-3-phosphate acyltransferase.